A 151-amino-acid polypeptide reads, in one-letter code: UPF0178 protein YaiI (151 aa).

The protein belongs to the UPF0178 family.

In Salmonella paratyphi C (strain RKS4594), this protein is UPF0178 protein YaiI.